Consider the following 361-residue polypeptide: Terpene synthase 6 (361 aa).

The DDxx(x)D/E motif motif lies at 81–86 (DDVLDA). Residues 223–231 (NDLVSYEKE) carry the NDxxSxxxD/E motif motif.

It belongs to the terpene synthase family.

The enzyme catalyses (2E,6E)-farnesyl diphosphate = (2S,3R,6S,9S)-(-)-protoillud-7-ene + diphosphate. Its function is as follows. Terpene synthase that converts its substrate farnesyl diphosphate (FPP) into the sesquiterpene (2S,3R,6S,9S)-(-)-protoillud-7-ene. This chain is Terpene synthase 6, found in Dictyostelium discoideum (Social amoeba).